A 30-amino-acid chain; its full sequence is Snaclec coagulation factor IX/factor X-binding protein subunit A (30 aa).

Positions 1 to 30 (DCPSDWSPYEGHCYKHFIKWMNNEDAERFC) constitute a C-type lectin domain. Cys-2 and Cys-13 are joined by a disulfide.

This sequence belongs to the snaclec family. As to quaternary structure, heterodimer of subunits A and B; disulfide-linked. In terms of tissue distribution, expressed by the venom gland.

It localises to the secreted. Anticoagulant protein which binds to the gamma-carboxyglutamic acid-domain regions of factors IX (F9) and factor X (F10) in the presence of calcium with a 1 to 1 stoichiometry. The protein is Snaclec coagulation factor IX/factor X-binding protein subunit A of Bothrops jararaca (Jararaca).